The primary structure comprises 835 residues: Axin-1 (835 aa).

Residues 16-60 (LGSSFTEDAPRPPVPGEEGDLVSSDGRQYNHSFYSSKSDSLKNEA) form a disordered region. Residues 40-53 (DGRQYNHSFYSSKS) are compositionally biased toward polar residues. One can recognise an RGS domain in the interval 92 to 214 (SLHSLLDDQD…LKSDIYLEYT (123 aa)). A disordered region spans residues 318–349 (ATSANDSEQQSMSSDADTLSLTDSSVDGVPPY). A compositionally biased stretch (low complexity) spans 328-344 (SMSSDADTLSLTDSSVD). An interaction with GSK3B region spans residues 351 to 436 (YRKPHRREIH…DADISTGPSL (86 aa)). The segment at 437–512 (ANHRVPPAVH…SPDGLPAGKI (76 aa)) is interaction with beta-catenin. Disordered stretches follow at residues 485–530 (KTPG…QARQ) and 602–627 (GYSSKGSTLSKRPVRKGEDGRNFEMR). Residues 616–627 (RKGEDGRNFEMR) are compositionally biased toward basic and acidic residues. The DIX domain occupies 753–835 (CENITVAYYF…KIIGKVEKVD (83 aa)).

As to quaternary structure, homodimer. Interacts with dixdc1. Interacts with hwa; leading to promote the tankyrase-mediated degradation of axin1. ADP-ribosylated by tankyrase tnks and tnks2. Poly-ADP-ribosylated protein is recognized by rnf146, followed by ubiquitination at 'Lys-48' and subsequent activation of the Wnt signaling pathway. Post-translationally, ubiquitinated by rnf146 when poly-ADP-ribosylated, leading to its degradation and subsequent activation of the Wnt signaling pathway.

The protein resides in the cytoplasm. It localises to the nucleus. Its subcellular location is the membrane. The protein localises to the cell membrane. In terms of biological role, component of the beta-catenin destruction complex required for regulating ctnnb1 levels through phosphorylation and ubiquitination, and modulating Wnt-signaling. Controls dorsoventral patterning via two opposing effects: down-regulates ctnnb1 to inhibit the Wnt signaling pathway and ventralize embryos, but also dorsalizes embryos by activating a Wnt-independent JNK signaling pathway. This Danio rerio (Zebrafish) protein is Axin-1 (axin1).